Reading from the N-terminus, the 31-residue chain is Cytochrome b6-f complex subunit 6 (31 aa).

A helical transmembrane segment spans residues 4-24; the sequence is LISYISLLAGFVIIASVFYLA.

It belongs to the PetL family. The 4 large subunits of the cytochrome b6-f complex are cytochrome b6, subunit IV (17 kDa polypeptide, PetD), cytochrome f and the Rieske protein, while the 4 small subunits are PetG, PetL, PetM and PetN. The complex functions as a dimer.

It localises to the plastid. The protein localises to the chloroplast thylakoid membrane. Its function is as follows. Component of the cytochrome b6-f complex, which mediates electron transfer between photosystem II (PSII) and photosystem I (PSI), cyclic electron flow around PSI, and state transitions. PetL is important for photoautotrophic growth as well as for electron transfer efficiency and stability of the cytochrome b6-f complex. This is Cytochrome b6-f complex subunit 6 from Tupiella akineta (Green alga).